The sequence spans 111 residues: uncharacterized protein (111 aa).

A helical membrane pass occupies residues 60–80 (TFGRFLAHISCLICILSKRIF).

Its subcellular location is the mitochondrion membrane. This is an uncharacterized protein from Arabidopsis thaliana (Mouse-ear cress).